A 603-amino-acid chain; its full sequence is Cell division control protein 48 homolog B (603 aa).

ATP is bound by residues 63 to 70 and 327 to 334; these read GPPGTGKT and GPPGCSKT.

This sequence belongs to the AAA ATPase family.

It localises to the nucleus. The protein resides in the cytoplasm. The protein localises to the cytoskeleton. It is found in the phragmoplast. Probably functions in cell division and growth processes. Interacts with certain SNAREs as part of specialized membrane fusion events where vesicles from the same organelle fuse (homotypic fusion). This chain is Cell division control protein 48 homolog B (CDC48B), found in Arabidopsis thaliana (Mouse-ear cress).